The chain runs to 1005 residues: uncharacterized protein (1005 aa).

An N-terminal signal peptide occupies residues 1–24 (MKFQRKYWGLLSTLGVSSAVALSA). A lipid anchor (N-palmitoyl cysteine) is attached at C25. C25 carries S-diacylglycerol cysteine lipidation. Disordered regions lie at residues 105-165 (KKDK…EEKF) and 786-825 (TQKI…WDDV). Composition is skewed to low complexity over residues 110 to 131 (TSSQ…TSTS) and 145 to 156 (QSSSNGQNNQQS). Positions 786 to 801 (TQKIDQQNTASTTSDV) are enriched in polar residues.

It localises to the cell membrane. This is an uncharacterized protein from Mycoplasma pneumoniae (strain ATCC 29342 / M129 / Subtype 1) (Mycoplasmoides pneumoniae).